The following is a 109-amino-acid chain: Small ribosomal subunit protein eS25 (109 aa).

A disordered region spans residues 1-36 (MGGASKKPISTVEKRMKKMAEEQQKKQQKRATTKTG). The segment covering 12 to 25 (VEKRMKKMAEEQQK) has biased composition (basic and acidic residues).

Belongs to the eukaryotic ribosomal protein eS25 family.

The polypeptide is Small ribosomal subunit protein eS25 (rps25e) (Sulfurisphaera tokodaii (strain DSM 16993 / JCM 10545 / NBRC 100140 / 7) (Sulfolobus tokodaii)).